Reading from the N-terminus, the 210-residue chain is MGAISKDGLNIANKSREIVRNKIKEVLGDRINEFNEKEMGIIERVVHATADPEYAKLLVFKNNPIEEGIKAIKEEKPIIVDVNMIKAGIRYNKVHCFINHPDVYEVAKKEGITRAVASMRLAKDLIDDGIVVIGNSPTALFEVIRLVKEENIKPKLIVGVPVGFVQASESKEALREVNVPSISTIGPKGGTPVAVAIINGIIAYAKNEKA.

Residues Ser15 and Arg44 each coordinate substrate. The active-site Proton donor/acceptor is His47.

It belongs to the CobH/CbiC family. As to quaternary structure, homodimer.

The enzyme catalyses Co-precorrin-8X = cob(II)yrinate. The protein operates within cofactor biosynthesis; adenosylcobalamin biosynthesis; cob(II)yrinate a,c-diamide from sirohydrochlorin (anaerobic route): step 9/10. Catalyzes the conversion of cobalt-precorrin-8 to cobyrinate. This is Cobalt-precorrin-8 methylmutase (cbiC) from Methanocaldococcus jannaschii (strain ATCC 43067 / DSM 2661 / JAL-1 / JCM 10045 / NBRC 100440) (Methanococcus jannaschii).